The primary structure comprises 163 residues: MNPRRKKRLTIILAISAGLAAVIGLVLYALSQNIDLFYTPSELVEGKGPDKIKPEEGQRLRIGGLVVPGSVQRDPQSLKVAFKLVDNGGHLVTVEFDGILPDLFREGQGIVAQGTLKDATTVAAFEVLAKHDENYMPPEVADATNGMHFKPEYTEAQLKGSKQ.

Residues 1–8 (MNPRRKKR) lie on the Cytoplasmic side of the membrane. A helical; Signal-anchor for type II membrane protein transmembrane segment spans residues 9–29 (LTIILAISAGLAAVIGLVLYA). Residues 30–163 (LSQNIDLFYT…TEAQLKGSKQ (134 aa)) are Periplasmic-facing. Heme is bound by residues His-131 and Tyr-135.

Belongs to the CcmE/CycJ family.

The protein resides in the cell inner membrane. In terms of biological role, heme chaperone required for the biogenesis of c-type cytochromes. Transiently binds heme delivered by CcmC and transfers the heme to apo-cytochromes in a process facilitated by CcmF and CcmH. This chain is Cytochrome c-type biogenesis protein CcmE, found in Aeromonas hydrophila subsp. hydrophila (strain ATCC 7966 / DSM 30187 / BCRC 13018 / CCUG 14551 / JCM 1027 / KCTC 2358 / NCIMB 9240 / NCTC 8049).